The chain runs to 159 residues: GDP-mannose mannosyl hydrolase (159 aa).

Substrate-binding positions include 2–3 (FL), phenylalanine 8, and arginine 36. A Nudix hydrolase domain is found at 13–153 (RSTPLVSLDF…SRAYFLAEKR (141 aa)). Mg(2+)-binding residues include glycine 49, glutamate 69, and glutamine 122. The Nudix box signature appears at 50–71 (GRVQKDETLEAAFERLTMAELG).

As to quaternary structure, homodimer. Mg(2+) is required as a cofactor.

The catalysed reaction is GDP-alpha-D-mannose + H2O = D-mannose + GDP + H(+). Its function is as follows. Hydrolyzes both GDP-mannose and GDP-glucose. Could participate in the regulation of cell wall biosynthesis by influencing the concentration of GDP-mannose or GDP-glucose in the cell. Might also be involved in the biosynthesis of the slime polysaccharide colanic acid. In Escherichia coli (strain K12), this protein is GDP-mannose mannosyl hydrolase.